The primary structure comprises 297 residues: MSSAHFNRGPAYGLSAEVKNKLAQKYDHQREQELREWIEGVTGRRIGSNFMDGLKDGIILCEFINKLQPGSVKKVNESTQNWHQLENIGNFIKAITKYGVKPHDIFEANDLFENTNHTQVQSTLLALASMAKTKGNKVNVGVKYAEKQERRFEPEKLREGRNIIGLQMGTNKFASQQGMTAYGTRRHLYDPKLGTDQPLDQATISLQMGTNKGASQAGMTAPGTKRQIFEPGLGMEHCDTLNVSLQMGSNKGASQRGMTVYGLPRQVYDPKYCLTPEYPELDEPTHNHHPHNYYNSA.

The 104-residue stretch at 28–131 (HQREQELREW…STLLALASMA (104 aa)) folds into the Calponin-homology (CH) domain. Residue serine 48 is modified to Phosphoserine. 3 Calponin-like repeats span residues 164-189 (IGLQ…RHLY), 204-229 (ISLQ…RQIF), and 243-268 (VSLQ…RQVY). The residue at position 170 (threonine 170) is a Phosphothreonine; by ROCK2. Residue serine 175 is modified to Phosphoserine; by ROCK2. Residues threonine 180 and threonine 184 each carry the phosphothreonine; by ROCK2 modification. The residue at position 259 (threonine 259) is a Phosphothreonine; by ROCK2.

It belongs to the calponin family. As to quaternary structure, part of cGMP kinase signaling complex at least composed of ACTA2/alpha-actin, CNN1/calponin H1, PLN/phospholamban, PRKG1 and ITPR1. In terms of tissue distribution, smooth muscle, and tissues containing significant amounts of smooth muscle.

Functionally, thin filament-associated protein that is implicated in the regulation and modulation of smooth muscle contraction. It is capable of binding to actin, calmodulin and tropomyosin. The interaction of calponin with actin inhibits the actomyosin Mg-ATPase activity. This chain is Calponin-1 (Cnn1), found in Rattus norvegicus (Rat).